Consider the following 337-residue polypeptide: MKVLGIETSCDDTGIAIYDVSKGLLINELHSQKKIHANYGGIIPELASREHTRKIIFLLDKIFKEKNIMKEIDLIAYTAGPGLAGSLLVGATFACSLGFSLNIPVLPVNHMEAHLLSPMLEYKSMQFPFIALLVSGKHTQIIAAYELGKYEILGNSLDDAAGEAFDKVSKMLGLKYPSGRELSSLAAQGIKNYFYFPRPMIHHSSLNFSFSGLKTFTSKVISNNTLNIQQKANIARAFEDAVIDVLLIKTKKALYKKGWKRLVIAGGVSANTVLRKRSKDMMENVFHGKVFYSSLKFCTDNGAMIAYLGSLRYKEASVSQLEIIVKPKWSIDKLSYI.

The Fe cation site is built by His110 and His114. Residues 133–137 (LVSGK), Asp166, Gly179, and Asn271 contribute to the substrate site. Asp300 provides a ligand contact to Fe cation.

The protein belongs to the KAE1 / TsaD family. Requires Fe(2+) as cofactor.

It is found in the cytoplasm. The enzyme catalyses L-threonylcarbamoyladenylate + adenosine(37) in tRNA = N(6)-L-threonylcarbamoyladenosine(37) in tRNA + AMP + H(+). Functionally, required for the formation of a threonylcarbamoyl group on adenosine at position 37 (t(6)A37) in tRNAs that read codons beginning with adenine. Is involved in the transfer of the threonylcarbamoyl moiety of threonylcarbamoyl-AMP (TC-AMP) to the N6 group of A37, together with TsaE and TsaB. TsaD likely plays a direct catalytic role in this reaction. This chain is tRNA N6-adenosine threonylcarbamoyltransferase, found in Buchnera aphidicola subsp. Schizaphis graminum (strain Sg).